Consider the following 252-residue polypeptide: MSGHNKWANIKHRKMAQDAKKSKIFTKIIRELMVAAREGGTDPNTNNALRAAIERAKAANMPKDTMEKAIKKGAGELEGQSFVEALYEVYAPGGVAMLIRALTDNKNRTAQEIRHLLSKHGGNMAESGSVAWMFERKGVITVPRSEISDMDEFQLLAIDAGAEDIQDEEDPVRIITAPEEASNVKNALEENGYTASYELTYIPKNTVSVSGNDAEKLLKLLNVLEDNDDVQEVYANFEMDDSEMEALMEKMQ.

It belongs to the TACO1 family.

The protein resides in the cytoplasm. This chain is Probable transcriptional regulatory protein Kole_1935, found in Kosmotoga olearia (strain ATCC BAA-1733 / DSM 21960 / TBF 19.5.1).